The primary structure comprises 419 residues: MAKPAATAAAASEELSQVPDEELLRWSKEELARRLRRAEGEKVGLMLEHGGLMRDVNRRLQQHLLEIRGLKDVNQRLQDDNQELRELCCFLDDDRQKGRKLAREWQRFGRHAAGAVWHEVARSQQKLRELEARQEALLRENLELKELVLLLDEERAALAATGAASGGGGGGGGAGSRSSIDSQASLSGPLSGGAPGAGARDVGDGSSTSSAGSGGSPDHHHHVPPPLLPPGPHKAPDGKAGATRRSLDDLSAPPHHRSIPNGLHDPSSTYIRQLESKVRLLEGDKLLAQQAGSGEFRTLRKGFSPYHSESQLASLPPSYQDSLQNGPACPAPELPSPPSAGYSPAGQKPEAVVHAMKVLEVHENLDRQLQDSCEEDLSEKEKAIVREMCNVVWRKLGDAASSKPSIRQHLSGNQFKGPL.

At alanine 2 the chain carries N-acetylalanine. 2 coiled-coil regions span residues 22-88 (ELLR…RELC) and 118-159 (HEVA…AALA). Disordered regions lie at residues 162-268 (GAAS…DPSS) and 307-348 (HSES…AGQK). Gly residues predominate over residues 164–175 (ASGGGGGGGGAG). Positions 176-189 (SRSSIDSQASLSGP) are enriched in low complexity. Serine 178 is subject to Phosphoserine. Residues 224-233 (PPPLLPPGPH) show a composition bias toward pro residues. Serine 246 bears the Phosphoserine mark. Residues 307-325 (HSESQLASLPPSYQDSLQN) show a composition bias toward polar residues. Pro residues predominate over residues 329–338 (CPAPELPSPP).

The protein belongs to the CCDC85 family. May interact with ARVCF, CTNND1, CTNND2 and PKP4.

It is found in the cell junction. Its subcellular location is the tight junction. It localises to the adherens junction. May play a role in cell-cell adhesion and epithelium development through its interaction with proteins of the beta-catenin family. May play an important role in cortical development, especially in the maintenance of radial glia. The chain is Coiled-coil domain-containing protein 85C (CCDC85C) from Homo sapiens (Human).